The following is a 299-amino-acid chain: ATP synthase gamma chain (299 aa).

It belongs to the ATPase gamma chain family. F-type ATPases have 2 components, CF(1) - the catalytic core - and CF(0) - the membrane proton channel. CF(1) has five subunits: alpha(3), beta(3), gamma(1), delta(1), epsilon(1). CF(0) has three main subunits: a, b and c.

The protein localises to the cell inner membrane. Produces ATP from ADP in the presence of a proton gradient across the membrane. The gamma chain is believed to be important in regulating ATPase activity and the flow of protons through the CF(0) complex. The chain is ATP synthase gamma chain from Rhodospirillum rubrum.